Reading from the N-terminus, the 429-residue chain is Adenylosuccinate synthetase (429 aa).

GTP is bound by residues 12 to 18 (GDEGKGK) and 40 to 42 (GHT). D13 acts as the Proton acceptor in catalysis. Positions 13 and 40 each coordinate Mg(2+). IMP-binding positions include 13-16 (DEGK), 38-41 (NAGH), T129, R143, Q223, T238, and R302. Catalysis depends on H41, which acts as the Proton donor. Residue 298–304 (TVTGRPR) participates in substrate binding. Residues R304, 330–332 (KLD), and 412–414 (STS) contribute to the GTP site.

It belongs to the adenylosuccinate synthetase family. Homodimer. The cofactor is Mg(2+).

It is found in the cytoplasm. It carries out the reaction IMP + L-aspartate + GTP = N(6)-(1,2-dicarboxyethyl)-AMP + GDP + phosphate + 2 H(+). It participates in purine metabolism; AMP biosynthesis via de novo pathway; AMP from IMP: step 1/2. Its function is as follows. Plays an important role in the de novo pathway of purine nucleotide biosynthesis. Catalyzes the first committed step in the biosynthesis of AMP from IMP. The sequence is that of Adenylosuccinate synthetase from Rhodospirillum rubrum (strain ATCC 11170 / ATH 1.1.1 / DSM 467 / LMG 4362 / NCIMB 8255 / S1).